The primary structure comprises 128 residues: Large ribosomal subunit protein bL17 (128 aa).

The protein belongs to the bacterial ribosomal protein bL17 family. As to quaternary structure, part of the 50S ribosomal subunit. Contacts protein L32.

The sequence is that of Large ribosomal subunit protein bL17 from Pseudomonas fluorescens (strain Pf0-1).